We begin with the raw amino-acid sequence, 109 residues long: FAD assembly factor SdhE (109 aa).

Residues 1–22 (MQDNFTASSPSSSSSASGVAED) are disordered. Residues 7-17 (ASSPSSSSSAS) show a composition bias toward low complexity.

It belongs to the SdhE FAD assembly factor family.

It is found in the cytoplasm. Its function is as follows. An FAD assembly protein, which accelerates covalent attachment of the cofactor into other proteins. Plays an essential role in the assembly of succinate dehydrogenase (SDH, respiratory complex II), an enzyme complex that is a component of both the tricarboxylic acid cycle and the electron transport chain, and which couples the oxidation of succinate to fumarate with the reduction of ubiquinone (coenzyme Q) to ubiquinol. Required for flavinylation of SdhA, when the SDH operon and this gene are overexpressed in G.oxydans. Flavinylation of SdhA is detected only in the presence of sdhE. This chain is FAD assembly factor SdhE, found in Acetobacter pasteurianus (strain NBRC 105184 / IFO 3283-01).